A 374-amino-acid chain; its full sequence is MGLEAFSRSAPLTLGVELELQLVNTNDYDLAPYADDMLRLMKKTPLPGSVVPEMTNSMIEISTGICHSCSEVLGQLTPIRDALVKSADKLNIAVLGGGTHPFQQWHERRIYDKPRFRELSELYGYLSKQFTIFGQHVHIGCPDANAALLMLHRMSRYIPHFIALSASSPYVQGQDTAFDSARLNSVFAFPLSGRAPLALTWEDFGAYFDKMTRTGVVRSMKDFYWDIRPKPEFGTIEIRVFDTPLTIERAAALAGYVQSLGAWFLADQPFMPAEDDYLVYTYNRFQACRFGLEAVYVDPAAGGHMPLRQHILATMDEMASHAAAQGASSALHLLRTEVEAGQNDARWLRERQREEQLLAEVCRQAAQRFRGLAL.

The protein belongs to the glutamate--cysteine ligase type 2 family. YbdK subfamily.

The catalysed reaction is L-cysteine + L-glutamate + ATP = gamma-L-glutamyl-L-cysteine + ADP + phosphate + H(+). Functionally, ATP-dependent carboxylate-amine ligase which exhibits weak glutamate--cysteine ligase activity. The chain is Putative glutamate--cysteine ligase 2 from Verminephrobacter eiseniae (strain EF01-2).